A 553-amino-acid chain; its full sequence is Putative transport protein YidE (553 aa).

5 helical membrane-spanning segments follow: residues 4-24 (IALTVSILALVAVVGLFIGNV), 28-48 (GIGLGIGGVLFGGIIVGHFVS), 65-85 (FGLILFVYTIGIQVGPGFFAS), 95-115 (LFAVLIVIIGGLVTAILHKLF), and 158-178 (MSYAMAYPFGICGILFTMWML). 2 consecutive RCK C-terminal domains span residues 191–276 (QQHE…VIGQ) and 279–361 (DTSL…VLGN). The next 6 membrane-spanning stretches (helical) occupy residues 371–391 (MLPVFIGIGLGVLLGSIPVFV), 393–413 (GFPAALKLGLAGGPLIMALIL), 439–459 (IVLFLSIVGLKSGGDFVNTLV), 464–484 (LSWIGYGALITAVPLITVGIL), 493–513 (YLTMCGMLAGSMTDPPALAFA), and 533–553 (LVMFLRIITPQLLAVLFWSIG).

This sequence belongs to the AAE transporter (TC 2.A.81) family. YidE subfamily.

It is found in the cell membrane. This chain is Putative transport protein YidE, found in Shigella flexneri serotype 5b (strain 8401).